We begin with the raw amino-acid sequence, 21 residues long: Cyanophlyctin (21 aa).

As to expression, expressed by the skin glands.

Its subcellular location is the secreted. Has antibacterial activity against E.coli HP101BA (MIC=6.4 uM), K.pneumoniae PTCC1388 (MIC=7.3 uM), M.luteus PTCC1625 (MIC=4.7 uM) and S.aureus PTCC1431 (MIC=5.3 uM). Has no or very limited (&lt;3%) hemolytic activity at concentrations of 15 ug/ml and 60 ug/ml, respectively. This chain is Cyanophlyctin, found in Euphlyctis cyanophlyctis (Skittering frog).